Consider the following 393-residue polypeptide: MTTSQRTAAILVAAGRGLRAGAGGPKQYRTIGGRTVIHRALAAFAEHPEVAVVQPVVNPDDIDVFNAAVAGLRHEAPARGGATRQASVLAGLEALVPHKPEIVLIHDAARPFVTPAVISRAIIAANKTGAAIPVAPVTDTIKEVGASGDITATPERAKLRIAQTPQTFRFDTILEAHRRAAREGLTEFTDDAAIAEWAGLTVATFEGDVANMKLTTPEDFVREEARLAASLGDIRTGTGYDVHAFGEGDHVWLCGLRVPHTKGFLAHSDGDVGLHALVDAILGALADGDIGSHFPPSDMKWKGASSDQFLKYAIERVAARGGRVANLEVTMICERPKIGPLRDQMRARIAEISGVDISRIAVKATTSERLGFTGREEGIAATASATIRLPWGA.

The tract at residues 1–234 is 2-C-methyl-D-erythritol 4-phosphate cytidylyltransferase; it reads MTTSQRTAAI…ARLAASLGDI (234 aa). The segment at 235 to 393 is 2-C-methyl-D-erythritol 2,4-cyclodiphosphate synthase; that stretch reads RTGTGYDVHA…SATIRLPWGA (159 aa). Residues D241 and H243 each contribute to the a divalent metal cation site. Residues 241 to 243 and 267 to 268 each bind 4-CDP-2-C-methyl-D-erythritol 2-phosphate; these read DVH and HS. H275 is a binding site for a divalent metal cation. 4-CDP-2-C-methyl-D-erythritol 2-phosphate is bound by residues 289–291, 365–368, F372, and R375; these read DIG and TTSE.

This sequence in the N-terminal section; belongs to the IspD/TarI cytidylyltransferase family. IspD subfamily. The protein in the C-terminal section; belongs to the IspF family. A divalent metal cation is required as a cofactor.

It catalyses the reaction 2-C-methyl-D-erythritol 4-phosphate + CTP + H(+) = 4-CDP-2-C-methyl-D-erythritol + diphosphate. The catalysed reaction is 4-CDP-2-C-methyl-D-erythritol 2-phosphate = 2-C-methyl-D-erythritol 2,4-cyclic diphosphate + CMP. It functions in the pathway isoprenoid biosynthesis; isopentenyl diphosphate biosynthesis via DXP pathway; isopentenyl diphosphate from 1-deoxy-D-xylulose 5-phosphate: step 2/6. Its pathway is isoprenoid biosynthesis; isopentenyl diphosphate biosynthesis via DXP pathway; isopentenyl diphosphate from 1-deoxy-D-xylulose 5-phosphate: step 4/6. In terms of biological role, bifunctional enzyme that catalyzes the formation of 4-diphosphocytidyl-2-C-methyl-D-erythritol from CTP and 2-C-methyl-D-erythritol 4-phosphate (MEP) (IspD), and catalyzes the conversion of 4-diphosphocytidyl-2-C-methyl-D-erythritol 2-phosphate (CDP-ME2P) to 2-C-methyl-D-erythritol 2,4-cyclodiphosphate (ME-CPP) with a corresponding release of cytidine 5-monophosphate (CMP) (IspF). In Bradyrhizobium sp. (strain ORS 278), this protein is Bifunctional enzyme IspD/IspF.